We begin with the raw amino-acid sequence, 283 residues long: BTB/POZ domain-containing protein KCTD15 (283 aa).

The disordered stretch occupies residues 1–32 (MPHRKERPSGSSLHTHGSTGTAEGGNMSRLSL). Residues 9-21 (SGSSLHTHGSTGT) show a composition bias toward low complexity. Serine 31, serine 35, and serine 38 each carry phosphoserine. The 71-residue stretch at 56-126 (APVHIDVGGH…LRTSKLLLPD (71 aa)) folds into the BTB domain.

Forms oligomers, predominantly homopentamers. Interacts with KCTD1, probably forming heteropentamers depending on its abundance in a cell-type dependent manner. Interacts with TFAP2A; this interaction inhibits TFAP2A transcriptional activation.

The protein localises to the nucleus. Its function is as follows. During embryonic development, it is involved in neural crest formation. Inhibits AP2 transcriptional activity by interaction with its activation domain. The sequence is that of BTB/POZ domain-containing protein KCTD15 (KCTD15) from Homo sapiens (Human).